Here is a 148-residue protein sequence, read N- to C-terminus: Lysozyme C (148 aa).

The N-terminal stretch at methionine 1–alanine 18 is a signal peptide. Positions lysine 19–valine 148 constitute a C-type lysozyme domain. 4 disulfides stabilise this stretch: cysteine 24–cysteine 146, cysteine 48–cysteine 134, cysteine 83–cysteine 99, and cysteine 95–cysteine 113. Active-site residues include glutamate 53 and aspartate 71.

Belongs to the glycosyl hydrolase 22 family. Monomer.

Its subcellular location is the secreted. It carries out the reaction Hydrolysis of (1-&gt;4)-beta-linkages between N-acetylmuramic acid and N-acetyl-D-glucosamine residues in a peptidoglycan and between N-acetyl-D-glucosamine residues in chitodextrins.. Lysozymes have primarily a bacteriolytic function; those in tissues and body fluids are associated with the monocyte-macrophage system and enhance the activity of immunoagents. The sequence is that of Lysozyme C (LYZ) from Hylobates lar (Lar gibbon).